The primary structure comprises 575 residues: Carboxylesterase 5A (575 aa).

The signal sequence occupies residues 1–20; sequence MSGNWVHPGQILIWAIWVLA. Residues Cys94 and Cys121 are joined by a disulfide bond. Ser226 (acyl-ester intermediate) is an active-site residue. A glycan (N-linked (GlcNAc...) asparagine) is linked at Asn281. Glu345 (charge relay system) is an active-site residue. Residue Asn363 is glycosylated (N-linked (GlcNAc...) asparagine). The active-site Charge relay system is the His454. Asn513 and Asn524 each carry an N-linked (GlcNAc...) asparagine glycan.

It belongs to the type-B carboxylesterase/lipase family. Post-translationally, N-glycosylated.

The protein localises to the secreted. It catalyses the reaction a carboxylic ester + H2O = an alcohol + a carboxylate + H(+). Involved in the detoxification of xenobiotics and in the activation of ester and amide prodrugs. This chain is Carboxylesterase 5A (CES5A), found in Homo sapiens (Human).